Here is a 182-residue protein sequence, read N- to C-terminus: MSEAPKKRWYVVQAFSGFEGRVAQSLREHIKMHGMEELFGEVLVPTEEVVEMRAGQRRKSERKFFPGYVLVQMIMNDESWHLVRSVPRVMGFIGGTSDRPAPITDKEADAILNRLEKASEAPRPKTMFEAGEVVRVNDGPFADFNGTVEEVDYEKSRLKVSVSIFGRATPVELEFGQVEKLD.

In terms of domain architecture, KOW spans 131–161 (GEVVRVNDGPFADFNGTVEEVDYEKSRLKVS).

The protein belongs to the NusG family.

Functionally, participates in transcription elongation, termination and antitermination. The protein is Transcription termination/antitermination protein NusG of Vibrio cholerae serotype O1 (strain ATCC 39315 / El Tor Inaba N16961).